The chain runs to 451 residues: Tubulin gamma-1 chain (451 aa).

142–148 is a GTP binding site; the sequence is AGGTGSG.

It belongs to the tubulin family.

It is found in the cytoplasm. It localises to the cytoskeleton. The protein resides in the microtubule organizing center. The protein localises to the centrosome. Its subcellular location is the spindle. Its function is as follows. Tubulin is the major constituent of microtubules. The gamma chain is found at microtubule organizing centers (MTOC) such as the spindle poles or the centrosome, suggesting that it is involved in the minus-end nucleation of microtubule assembly. In Xenopus laevis (African clawed frog), this protein is Tubulin gamma-1 chain (tubg1).